Here is a 490-residue protein sequence, read N- to C-terminus: Tryptophan decarboxylase (490 aa).

Lysine 306 is subject to N6-(pyridoxal phosphate)lysine.

It belongs to the group II decarboxylase family. As to quaternary structure, homodimer. Pyridoxal 5'-phosphate is required as a cofactor.

It localises to the cytoplasm. The enzyme catalyses L-tryptophan + H(+) = tryptamine + CO2. With respect to regulation, inhibited by (S)-alpha-fluoromethyltryptophan. Functionally, catalyzes the decarboxylation of tryptophan to tryptamine. Tryptamine is a neurotransmitter that induces the release of serotonin, which is suggested to modulate gastrointestinal motility. Therefore, the tryptophan decarboxylase from the gut bacteria Ruminococcus gnavus (strain ATCC 29149 / VPI C7-9) may influence host brain and behavior. Has weak activity with tyrosine and phenylalanine. This Mediterraneibacter gnavus (strain ATCC 29149 / DSM 114966 / JCM 6515 / VPI C7-9) (Ruminococcus gnavus) protein is Tryptophan decarboxylase.